The primary structure comprises 418 residues: Serine hydroxymethyltransferase (418 aa).

Residues L121 and 125–127 contribute to the (6S)-5,6,7,8-tetrahydrofolate site; that span reads GHL. N6-(pyridoxal phosphate)lysine is present on K230. 355-357 is a (6S)-5,6,7,8-tetrahydrofolate binding site; sequence SPF.

The protein belongs to the SHMT family. Homodimer. Pyridoxal 5'-phosphate serves as cofactor.

The protein resides in the cytoplasm. It catalyses the reaction (6R)-5,10-methylene-5,6,7,8-tetrahydrofolate + glycine + H2O = (6S)-5,6,7,8-tetrahydrofolate + L-serine. Its pathway is one-carbon metabolism; tetrahydrofolate interconversion. The protein operates within amino-acid biosynthesis; glycine biosynthesis; glycine from L-serine: step 1/1. Its function is as follows. Catalyzes the reversible interconversion of serine and glycine with tetrahydrofolate (THF) serving as the one-carbon carrier. This reaction serves as the major source of one-carbon groups required for the biosynthesis of purines, thymidylate, methionine, and other important biomolecules. Also exhibits THF-independent aldolase activity toward beta-hydroxyamino acids, producing glycine and aldehydes, via a retro-aldol mechanism. This is Serine hydroxymethyltransferase from Streptococcus pyogenes serotype M6 (strain ATCC BAA-946 / MGAS10394).